Here is a 314-residue protein sequence, read N- to C-terminus: Aspartate carbamoyltransferase catalytic subunit (314 aa).

Positions 64 and 65 each coordinate carbamoyl phosphate. Lysine 92 is a binding site for L-aspartate. Carbamoyl phosphate is bound by residues arginine 114, histidine 142, and glutamine 145. L-aspartate is bound by residues arginine 175 and arginine 230. Carbamoyl phosphate contacts are provided by glycine 271 and proline 272.

The protein belongs to the aspartate/ornithine carbamoyltransferase superfamily. ATCase family. As to quaternary structure, heterododecamer (2C3:3R2) of six catalytic PyrB chains organized as two trimers (C3), and six regulatory PyrI chains organized as three dimers (R2).

The catalysed reaction is carbamoyl phosphate + L-aspartate = N-carbamoyl-L-aspartate + phosphate + H(+). It participates in pyrimidine metabolism; UMP biosynthesis via de novo pathway; (S)-dihydroorotate from bicarbonate: step 2/3. Its function is as follows. Catalyzes the condensation of carbamoyl phosphate and aspartate to form carbamoyl aspartate and inorganic phosphate, the committed step in the de novo pyrimidine nucleotide biosynthesis pathway. The sequence is that of Aspartate carbamoyltransferase catalytic subunit from Deinococcus radiodurans (strain ATCC 13939 / DSM 20539 / JCM 16871 / CCUG 27074 / LMG 4051 / NBRC 15346 / NCIMB 9279 / VKM B-1422 / R1).